Reading from the N-terminus, the 161-residue chain is Large ribosomal subunit protein bL17 (161 aa).

Basic and acidic residues predominate over residues 132–144 (ARAKRAEDNRKAL). The interval 132–161 (ARAKRAEDNRKALEAQQAQAEAETTGETKA) is disordered. The span at 145–161 (EAQQAQAEAETTGETKA) shows a compositional bias: low complexity.

Belongs to the bacterial ribosomal protein bL17 family. As to quaternary structure, part of the 50S ribosomal subunit. Contacts protein L32.

The sequence is that of Large ribosomal subunit protein bL17 from Koribacter versatilis (strain Ellin345).